Here is a 345-residue protein sequence, read N- to C-terminus: Probable aldo-keto reductase 3 (345 aa).

Tyrosine 63 acts as the Proton donor in catalysis. Residue histidine 130 participates in substrate binding. NADP(+) is bound at residue 209–219; sequence SPLGRGFFASG.

This sequence belongs to the aldo/keto reductase family.

This is Probable aldo-keto reductase 3 from Arabidopsis thaliana (Mouse-ear cress).